Here is a 214-residue protein sequence, read N- to C-terminus: uncharacterized protein (214 aa).

Helical transmembrane passes span 18–38 (LLLL…NTFV), 51–71 (DLAL…IVAG), 80–100 (ILVL…VLLV), 108–128 (LLVL…AFNV), and 145–165 (FFGV…GYII).

The protein localises to the cell membrane. This is an uncharacterized protein from Geobacillus stearothermophilus (Bacillus stearothermophilus).